The primary structure comprises 332 residues: MSFLEQIIERAKSDVKTIVLPESTDLRVIKAASMIMKKGIAKVVLIGNEKEIKSLAGDIDLEGVMIEDSLNSEKLEDYANTLYELRKSKGMTIEAARETIKDPLYYGVMMVKKGEADGMVAGAVNSTANTLRPALQILKTAPGTKLVSSFFVMVVPNCEYGHNGTFVYADCGLVENPDADQLSEIAISASKSFEMLVGAKPQVAMLSYSSYGSAKSELTEKVIKATQLAKEKAPHLAIDGELQVDAAIVPEVAKSKAKGSSVAGKANVLIFPDLDAGNIAYKLTQRLAKAEAYGPITQGLARPVNDLSRGCSAEDIVGVAAITAVQAQYVKA.

Belongs to the phosphate acetyltransferase and butyryltransferase family.

It localises to the cytoplasm. The catalysed reaction is acetyl-CoA + phosphate = acetyl phosphate + CoA. It participates in metabolic intermediate biosynthesis; acetyl-CoA biosynthesis; acetyl-CoA from acetate: step 2/2. The sequence is that of Phosphate acetyltransferase (pta) from Acetivibrio thermocellus (strain ATCC 27405 / DSM 1237 / JCM 9322 / NBRC 103400 / NCIMB 10682 / NRRL B-4536 / VPI 7372) (Clostridium thermocellum).